Consider the following 243-residue polypeptide: uncharacterized protein (243 aa).

2 stretches are compositionally biased toward basic and acidic residues: residues 1–11 (MSDEGYRELVE) and 167–178 (RNRDPPRPSYLR). Disordered regions lie at residues 1–26 (MSDE…SPDR) and 146–243 (ELYQ…CWPF). Over residues 185 to 200 (STTTARRPRAMTSTPE) the composition is skewed to low complexity.

This is an uncharacterized protein from Canis lupus familiaris (Dog).